The following is a 232-amino-acid chain: UPF0758 protein Clos_1766 (232 aa).

In terms of domain architecture, MPN spans 110–232 (KIKGPDDVSN…YFSMKEHKLI (123 aa)). Zn(2+)-binding residues include histidine 181, histidine 183, and aspartate 194. The JAMM motif signature appears at 181-194 (HNHPSGDPNPSGED).

This sequence belongs to the UPF0758 family.

In Alkaliphilus oremlandii (strain OhILAs) (Clostridium oremlandii (strain OhILAs)), this protein is UPF0758 protein Clos_1766.